Reading from the N-terminus, the 166-residue chain is Urease accessory protein UreE (166 aa).

The disordered stretch occupies residues 132-156 (FQPEHGAYGGGHHHSRHGDEDFNYP).

The protein belongs to the UreE family.

The protein resides in the cytoplasm. Its function is as follows. Involved in urease metallocenter assembly. Binds nickel. Probably functions as a nickel donor during metallocenter assembly. The polypeptide is Urease accessory protein UreE (Pseudomonas fluorescens (strain ATCC BAA-477 / NRRL B-23932 / Pf-5)).